The primary structure comprises 109 residues: Nucleoid-associated protein MADE_1013280 (109 aa).

The disordered stretch occupies residues 86 to 109 (TSKEKMGDVTGGMPLPPGFKMPGF). The segment covering 99–109 (PLPPGFKMPGF) has biased composition (pro residues).

The protein belongs to the YbaB/EbfC family. Homodimer.

It is found in the cytoplasm. It localises to the nucleoid. Binds to DNA and alters its conformation. May be involved in regulation of gene expression, nucleoid organization and DNA protection. The protein is Nucleoid-associated protein MADE_1013280 of Alteromonas mediterranea (strain DSM 17117 / CIP 110805 / LMG 28347 / Deep ecotype).